We begin with the raw amino-acid sequence, 782 residues long: Endonuclease MutS2 (782 aa).

336–343 provides a ligand contact to ATP; it reads GPNTGGKT. A Smr domain is found at 707–782; that stretch reads LDLRGYRYEE…GFGVTVAELK (76 aa).

Belongs to the DNA mismatch repair MutS family. MutS2 subfamily. As to quaternary structure, homodimer. Binds to stalled ribosomes, contacting rRNA.

Functionally, endonuclease that is involved in the suppression of homologous recombination and thus may have a key role in the control of bacterial genetic diversity. Its function is as follows. Acts as a ribosome collision sensor, splitting the ribosome into its 2 subunits. Detects stalled/collided 70S ribosomes which it binds and splits by an ATP-hydrolysis driven conformational change. Acts upstream of the ribosome quality control system (RQC), a ribosome-associated complex that mediates the extraction of incompletely synthesized nascent chains from stalled ribosomes and their subsequent degradation. Probably generates substrates for RQC. This is Endonuclease MutS2 from Staphylococcus epidermidis (strain ATCC 12228 / FDA PCI 1200).